The sequence spans 199 residues: Gamma-glutamylcyclotransferase 2-3 (199 aa).

Substrate is bound at residue 5–10 (VFGYGS). Glu-86 (proton acceptor) is an active-site residue.

This sequence belongs to the gamma-glutamylcyclotransferase family. Mn(2+) is required as a cofactor.

It localises to the cytoplasm. The enzyme catalyses glutathione = L-cysteinylglycine + 5-oxo-L-proline. Converts GSH to 5-oxoproline and cysteine-glycine (Cys-Gly) dipeptide in vitro and plays a significant role in glutathione (GSH) homeostasis. Has no activity towards gamma-glutamyl-L-cysteine but possesses very low activity towards gamma-glutamyl-L-alanine. This is Gamma-glutamylcyclotransferase 2-3 from Arabidopsis thaliana (Mouse-ear cress).